The primary structure comprises 108 residues: uncharacterized protein (108 aa).

A helical membrane pass occupies residues leucine 10–phenylalanine 32.

Its subcellular location is the membrane. This is an uncharacterized protein from Saccharomyces cerevisiae (strain ATCC 204508 / S288c) (Baker's yeast).